Consider the following 88-residue polypeptide: Large ribosomal subunit protein eL37 (88 aa).

4 residues coordinate Zn(2+): Cys-17, Cys-20, Cys-32, and Cys-35. The segment at 17-35 adopts a C4-type zinc-finger fold; it reads CNRCGRRSFHVQKKTCSSC.

The protein belongs to the eukaryotic ribosomal protein eL37 family. The cofactor is Zn(2+).

Binds to the 23S rRNA. The chain is Large ribosomal subunit protein eL37 (RPL37) from Candida albicans (Yeast).